A 121-amino-acid polypeptide reads, in one-letter code: UPF0102 protein Syncc9902_1284 (121 aa).

It belongs to the UPF0102 family.

This chain is UPF0102 protein Syncc9902_1284, found in Synechococcus sp. (strain CC9902).